Reading from the N-terminus, the 158-residue chain is pH 6 antigen (158 aa).

The signal sequence occupies residues 1–26 (MKMKCFAKNALAVTTLMIAACGMANA).

As to quaternary structure, forms a homomer composed of subunits assembled in a large structure.

Its subcellular location is the fimbrium. Fibrillar structure, part of fimbriae, necessary for full virulence. The sequence is that of pH 6 antigen (psaA) from Yersinia pestis.